Reading from the N-terminus, the 88-residue chain is Putative membrane protein insertion efficiency factor (88 aa).

The protein belongs to the UPF0161 family.

The protein resides in the cell inner membrane. Functionally, could be involved in insertion of integral membrane proteins into the membrane. In Koribacter versatilis (strain Ellin345), this protein is Putative membrane protein insertion efficiency factor.